The primary structure comprises 255 residues: Undecaprenyl-diphosphatase (255 aa).

Transmembrane regions (helical) follow at residues 1 to 21, 75 to 95, 96 to 116, 174 to 194, 203 to 223, and 234 to 254; these read MDII…FLPI, IIIS…IVYQ, LFTV…FLIV, TEFS…FDIV, GDIS…LITI, and NFVP…MFFV.

It belongs to the UppP family.

Its subcellular location is the cell membrane. It catalyses the reaction di-trans,octa-cis-undecaprenyl diphosphate + H2O = di-trans,octa-cis-undecaprenyl phosphate + phosphate + H(+). Catalyzes the dephosphorylation of undecaprenyl diphosphate (UPP). This Methanococcus aeolicus (strain ATCC BAA-1280 / DSM 17508 / OCM 812 / Nankai-3) protein is Undecaprenyl-diphosphatase.